Reading from the N-terminus, the 169-residue chain is Inorganic pyrophosphatase (169 aa).

Met1 is subject to N-formylmethionine. Residues Lys28, Arg42, and Tyr54 each coordinate substrate. Residues Asp64, Asp69, and Asp101 each coordinate Mg(2+). Position 138 (Tyr138) interacts with substrate.

This sequence belongs to the PPase family. In terms of assembly, homohexamer. It depends on Mg(2+) as a cofactor.

It localises to the cytoplasm. The enzyme catalyses diphosphate + H2O = 2 phosphate + H(+). Catalyzes the hydrolysis of inorganic pyrophosphate (PPi) forming two phosphate ions. This chain is Inorganic pyrophosphatase, found in Nostoc sp. (strain PCC 7120 / SAG 25.82 / UTEX 2576).